The chain runs to 421 residues: Myb-related protein Pp2 (421 aa).

HTH myb-type domains lie at 9-61 (KVGL…TNYL) and 62-116 (RPDL…KKRL). 2 DNA-binding regions (H-T-H motif) span residues 37-61 (WRAIPKLAGLLRCGKSCRLRWTNYL) and 89-112 (WSRIAAQLPGRTDNEIKNYWNTRL). The segment at 119 to 240 (QGLDPNTHLP…VTTKSHEDHR (122 aa)) is disordered. Over residues 136-147 (DTEDDTDDEGGD) the composition is skewed to acidic residues.

The protein localises to the nucleus. Possible transcription activator. This chain is Myb-related protein Pp2 (PP2), found in Physcomitrium patens (Spreading-leaved earth moss).